We begin with the raw amino-acid sequence, 169 residues long: Cell division inhibitor SulA (169 aa).

Residues 106–112 form a ftsZ binding region; the sequence is ALRTGNY. The segment at 162–169 is lon protease binding; it reads KIHSNLYH.

This sequence belongs to the SulA family. As to quaternary structure, interacts with FtsZ. Post-translationally, is rapidly cleaved and degraded by the Lon protease once DNA damage is repaired.

In terms of biological role, component of the SOS system and an inhibitor of cell division. Accumulation of SulA causes rapid cessation of cell division and the appearance of long, non-septate filaments. In the presence of GTP, binds a polymerization-competent form of FtsZ in a 1:1 ratio, thus inhibiting FtsZ polymerization and therefore preventing it from participating in the assembly of the Z ring. This mechanism prevents the premature segregation of damaged DNA to daughter cells during cell division. This is Cell division inhibitor SulA from Citrobacter koseri (strain ATCC BAA-895 / CDC 4225-83 / SGSC4696).